A 145-amino-acid polypeptide reads, in one-letter code: Small ribosomal subunit protein uS9 (145 aa).

Residues M1–S13 are compositionally biased toward polar residues. The interval M1–T24 is disordered.

Belongs to the universal ribosomal protein uS9 family.

Its subcellular location is the cytoplasm. The sequence is that of Small ribosomal subunit protein uS9 (RPS16) from Lupinus polyphyllus (Large-leaved lupine).